The sequence spans 255 residues: uncharacterized protein (255 aa).

The first 23 residues, 1–23 (MKRLNKLVLGIIFLFLVISITAG), serve as a signal peptide directing secretion. Cys24 carries N-palmitoyl cysteine lipidation. The S-diacylglycerol cysteine moiety is linked to residue Cys24.

It belongs to the staphylococcal tandem lipoprotein family.

The protein resides in the cell membrane. This is an uncharacterized protein from Staphylococcus aureus (strain Mu50 / ATCC 700699).